Consider the following 118-residue polypeptide: Iron-sulfur cluster insertion protein ErpA (118 aa).

3 residues coordinate iron-sulfur cluster: Cys-46, Cys-110, and Cys-112.

It belongs to the HesB/IscA family. As to quaternary structure, homodimer. Requires iron-sulfur cluster as cofactor.

Required for insertion of 4Fe-4S clusters for at least IspG. The polypeptide is Iron-sulfur cluster insertion protein ErpA (Psychromonas ingrahamii (strain DSM 17664 / CCUG 51855 / 37)).